The chain runs to 376 residues: TraB domain-containing protein (376 aa).

The residue at position 1 (M1) is an N-acetylmethionine. T64 bears the Phosphothreonine mark.

The protein is TraB domain-containing protein (Trabd) of Mus musculus (Mouse).